We begin with the raw amino-acid sequence, 450 residues long: UDP-N-acetylmuramoylalanine--D-glutamate ligase (450 aa).

119–125 (GSNGKTT) contributes to the ATP binding site.

It belongs to the MurCDEF family.

It localises to the cytoplasm. The enzyme catalyses UDP-N-acetyl-alpha-D-muramoyl-L-alanine + D-glutamate + ATP = UDP-N-acetyl-alpha-D-muramoyl-L-alanyl-D-glutamate + ADP + phosphate + H(+). It functions in the pathway cell wall biogenesis; peptidoglycan biosynthesis. Its function is as follows. Cell wall formation. Catalyzes the addition of glutamate to the nucleotide precursor UDP-N-acetylmuramoyl-L-alanine (UMA). The protein is UDP-N-acetylmuramoylalanine--D-glutamate ligase of Bacillus cereus (strain AH187).